We begin with the raw amino-acid sequence, 271 residues long: 5'-AMP-activated protein kinase subunit beta-2 (271 aa).

The tract at residues 1–47 (MGNTTSERVSGERHGAKAARAEGGGHGPGKEHKIMVGSTDDPSVFSL) is disordered. Ser-38 is modified (phosphoserine; by ULK1). Phosphothreonine; by ULK1 is present on Thr-39. Ser-68 is modified (phosphoserine; by ULK1). Phosphoserine is present on residues Ser-94 and Ser-107. Residue Thr-147 is modified to Phosphothreonine. Residues Ser-157 and Ser-169 each carry the phosphoserine modification. Position 173 is a phosphoserine; by ULK1 (Ser-173). The residue at position 183 (Ser-183) is a Phosphoserine.

The protein belongs to the 5'-AMP-activated protein kinase beta subunit family. AMPK is a heterotrimer of an alpha catalytic subunit (PRKAA1 or PRKAA2), a beta (PRKAB1 or PRKAB2) and a gamma non-catalytic subunits (PRKAG1, PRKAG2 or PRKAG3). Post-translationally, phosphorylated when associated with the catalytic subunit (PRKAA1 or PRKAA2). Phosphorylated by ULK1 and ULK2; leading to negatively regulate AMPK activity and suggesting the existence of a regulatory feedback loop between ULK1, ULK2 and AMPK.

Its function is as follows. Non-catalytic subunit of AMP-activated protein kinase (AMPK), an energy sensor protein kinase that plays a key role in regulating cellular energy metabolism. In response to reduction of intracellular ATP levels, AMPK activates energy-producing pathways and inhibits energy-consuming processes: inhibits protein, carbohydrate and lipid biosynthesis, as well as cell growth and proliferation. AMPK acts via direct phosphorylation of metabolic enzymes, and by longer-term effects via phosphorylation of transcription regulators. Also acts as a regulator of cellular polarity by remodeling the actin cytoskeleton; probably by indirectly activating myosin. Beta non-catalytic subunit acts as a scaffold on which the AMPK complex assembles, via its C-terminus that bridges alpha (PRKAA1 or PRKAA2) and gamma subunits (PRKAG1, PRKAG2 or PRKAG3). The chain is 5'-AMP-activated protein kinase subunit beta-2 (Prkab2) from Rattus norvegicus (Rat).